Reading from the N-terminus, the 945-residue chain is Microtubule cross-linking factor 3 (945 aa).

Composition is skewed to low complexity over residues 1–23 (MSQP…AAAT), 72–93 (QQQL…TSGT), and 110–126 (PKGA…GAEG). Residues 1–25 (MSQPPSGGAAPAATSASAAAAATEA) form the signal peptide. 4 disordered regions span residues 1 to 250 (MSQP…SYWK), 265 to 293 (KERA…PVAG), 307 to 366 (SPMA…TLKN), and 494 to 522 (LSLK…DNED). The segment covering 141-151 (GQPEEAPREIE) has biased composition (basic and acidic residues). Residues 164–179 (GGVGGGGEGGGAGGGP) show a composition bias toward gly residues. Low complexity predominate over residues 219 to 235 (TAATSKTPGPGSRNSGS). Positions 236-247 (GSTGSGSGGGGS) are enriched in gly residues. Residues 328 to 345 (AMQAAAPPSSQPHSQQLQ) are compositionally biased toward low complexity. The stretch at 340-724 (HSQQLQEQED…GKVMQLQYEN (385 aa)) forms a coiled coil. Basic and acidic residues-rich tracts occupy residues 353–366 (EMEK…TLKN) and 494–511 (LSLK…EKKA). Position 567 is a phosphoserine (Ser567). Positions 741–811 (GIRGSPRDSD…PWPKSFSDRQ (71 aa)) are disordered. Over residues 745–766 (SPRDSDAESDAGKKESDDDSRP) the composition is skewed to basic and acidic residues. The residue at position 779 (Ser779) is a Phosphoserine. Residues 809 to 833 (DRQQMKDIRSEAERLGKTIDRLIAD) are a coiled coil. The helical transmembrane segment at 913 to 933 (PIILLILILVLFSSLSYTTIF) threads the bilayer.

This sequence belongs to the MTCL family.

The protein localises to the membrane. This is Microtubule cross-linking factor 3 (Mtcl3) from Mus musculus (Mouse).